The sequence spans 98 residues: Keratin, high sulfur matrix protein, IIIB3 (98 aa).

N-acetylalanine is present on Ala-1.

This sequence belongs to the KRTAP type 3 family. As to quaternary structure, interacts with wool keratins. Wool.

In the wool cortex, wool keratin intermediate filaments are embedded in an interfilamentous matrix, consisting of hair keratin-associated proteins (KRTAP), which are essential for the formation of a rigid and resistant wool shaft through their extensive disulfide bond cross-linking with abundant cysteine residues of wool keratins. The matrix proteins include the high-sulfur and high-glycine-tyrosine keratins. This chain is Keratin, high sulfur matrix protein, IIIB3, found in Ovis aries (Sheep).